We begin with the raw amino-acid sequence, 443 residues long: ATP-dependent protease ATPase subunit HslU (443 aa).

ATP is bound by residues Ile18, 60 to 65, Asp256, Glu321, and Arg393; that span reads GVGKTE.

Belongs to the ClpX chaperone family. HslU subfamily. A double ring-shaped homohexamer of HslV is capped on each side by a ring-shaped HslU homohexamer. The assembly of the HslU/HslV complex is dependent on binding of ATP.

It localises to the cytoplasm. ATPase subunit of a proteasome-like degradation complex; this subunit has chaperone activity. The binding of ATP and its subsequent hydrolysis by HslU are essential for unfolding of protein substrates subsequently hydrolyzed by HslV. HslU recognizes the N-terminal part of its protein substrates and unfolds these before they are guided to HslV for hydrolysis. This is ATP-dependent protease ATPase subunit HslU from Salmonella arizonae (strain ATCC BAA-731 / CDC346-86 / RSK2980).